We begin with the raw amino-acid sequence, 781 residues long: Tax1-binding protein 1 homolog A (781 aa).

2 coiled-coil regions span residues 148 to 453 (NSDI…QGDA) and 488 to 581 (DVEK…YMRE). The segment covering 441–465 (KLTQQQETQQGDANRNDASTETTLE) has biased composition (polar residues). 2 disordered regions span residues 441-510 (KLTQ…EEEC) and 630-691 (ETRD…EAPA). Positions 484 to 495 (TVARDVEKSRDE) are enriched in basic and acidic residues. Acidic residues predominate over residues 496 to 510 (EGNEQEEEDEEEEEC). A compositionally biased stretch (pro residues) spans 646–656 (RPPPLAPPPWG). 2 UBZ1-type zinc fingers span residues 716-742 (HKQC…VESH) and 743-769 (WRVC…VHTH). 8 residues coordinate Zn(2+): Cys719, Cys722, His738, His742, Cys746, Cys749, His765, and His769.

Little expression is observed during pectoral fin development, except for an elevated level of expression in the distal mesenchyme cells of some samples.

Its function is as follows. May have anti-apoptotic activity. This is Tax1-binding protein 1 homolog A from Danio rerio (Zebrafish).